The sequence spans 718 residues: Heme peroxidase 2 (718 aa).

An N-terminal signal peptide occupies residues 1–19 (MNLKPTILLFTILFLKCAT). Positions 20 to 146 (FEVNEETERI…QANRRCSSPP (127 aa)) are excised as a propeptide. Disordered regions lie at residues 41-64 (RASE…ANSD) and 108-144 (LLQS…RCSS). Over residues 45-64 (NSESEQTSQHIIVSQQANSD) the composition is skewed to polar residues. Residues 109-118 (LQSSETTTTT) show a composition bias toward low complexity. Basic residues predominate over residues 126-139 (SKRSAIFRSKRQAN). Cys-149 and Cys-164 are disulfide-bonded. The Proton acceptor role is filled by His-241. A Ca(2+)-binding site is contributed by Asp-242. Cys-262 and Cys-272 are joined by a disulfide. Residues Ser-311, Phe-313, Asp-315, and Ser-317 each contribute to the Ca(2+) site. N-linked (GlcNAc...) asparagine glycosylation is present at Asn-354. A disulfide bridge links Cys-358 with Cys-366. Position 477 (His-477) interacts with heme b. Residues Asn-551, Asn-592, Asn-662, and Asn-673 are each glycosylated (N-linked (GlcNAc...) asparagine). A disulfide bridge connects residues Cys-682 and Cys-705.

It belongs to the peroxidase family. Requires heme b as cofactor. In terms of tissue distribution, expressed in the hypodermis and gland cells of the pharynx. Specifically, there is low and transient expression from the distal bulb of the pharynx to the anterior of the buccal cavity. Whole body expression levels increase upon entry into the dauer phase.

The protein localises to the secreted. It carries out the reaction 2 a phenolic donor + H2O2 = 2 a phenolic radical donor + 2 H2O. Peroxidase which is involved in maintaining the cuticle integrity in the hypodermis and pharynx. It thus plays a role in conferring resistance against Gram-positive bacteria such as E.faecalis, S.aureus and C.diphtheriae, and yeast such as C.albicans. The chain is Heme peroxidase 2 from Caenorhabditis elegans.